A 98-amino-acid chain; its full sequence is Co-chaperonin GroES (98 aa).

It belongs to the GroES chaperonin family. As to quaternary structure, heptamer of 7 subunits arranged in a ring. Interacts with the chaperonin GroEL.

The protein resides in the cytoplasm. Functionally, together with the chaperonin GroEL, plays an essential role in assisting protein folding. The GroEL-GroES system forms a nano-cage that allows encapsulation of the non-native substrate proteins and provides a physical environment optimized to promote and accelerate protein folding. GroES binds to the apical surface of the GroEL ring, thereby capping the opening of the GroEL channel. The protein is Co-chaperonin GroES of Bartonella quintana (strain Toulouse) (Rochalimaea quintana).